The primary structure comprises 1040 residues: Multidrug resistance protein MdtB (1040 aa).

12 helical membrane-spanning segments follow: residues 16–36 (FIMR…AGII), 347–367 (LMMA…NIPA), 369–389 (IIPG…MVFL), 396–416 (LTLM…IVVI), 440–460 (IGFT…PLLF), 472–492 (FAIT…TLTP), 537–557 (WLTL…WVFI), 863–883 (LGST…VLGI), 888–908 (FIHP…ALLA), 911–931 (IAGS…IGIV), 968–988 (ILMT…STGV), and 998–1018 (IGMV…TPVI).

The protein belongs to the resistance-nodulation-cell division (RND) (TC 2.A.6) family. MdtB subfamily. In terms of assembly, part of a tripartite efflux system composed of MdtA, MdtB and MdtC. MdtB forms a heteromultimer with MdtC.

The protein resides in the cell inner membrane. Functionally, the MdtABC tripartite complex confers resistance against novobiocin and deoxycholate. In Escherichia coli (strain K12 / MC4100 / BW2952), this protein is Multidrug resistance protein MdtB.